The chain runs to 119 residues: Basic phospholipase A2 (119 aa).

Cystine bridges form between cysteine 11–cysteine 71, cysteine 27–cysteine 118, cysteine 29–cysteine 45, cysteine 44–cysteine 99, cysteine 51–cysteine 92, cysteine 60–cysteine 85, and cysteine 78–cysteine 90. Ca(2+)-binding residues include tyrosine 28, glycine 30, and glycine 32. Histidine 48 is a catalytic residue. Residue aspartate 49 participates in Ca(2+) binding. Aspartate 93 is an active-site residue.

The protein belongs to the phospholipase A2 family. Group I subfamily. D49 sub-subfamily. The cofactor is Ca(2+). Expressed by the venom gland.

It localises to the secreted. It carries out the reaction a 1,2-diacyl-sn-glycero-3-phosphocholine + H2O = a 1-acyl-sn-glycero-3-phosphocholine + a fatty acid + H(+). In terms of biological role, snake venom phospholipase A2 (PLA2) that has several activities. It is myotoxic, has weak anticoagulant activity and inhibits neuromuscular transmission by blocking acetylcholine release from the nerve termini. PLA2 catalyzes the calcium-dependent hydrolysis of the 2-acyl groups in 3-sn-phosphoglycerides. This is Basic phospholipase A2 from Hydrophis schistosus (Beaked sea snake).